A 286-amino-acid polypeptide reads, in one-letter code: 3-methyl-2-oxobutanoate hydroxymethyltransferase (286 aa).

The Mg(2+) site is built by Asp51 and Asp90. 3-methyl-2-oxobutanoate contacts are provided by residues 51–52, Asp90, and Lys120; that span reads DS. Mg(2+) is bound at residue Glu122. The active-site Proton acceptor is Glu189. A disordered region spans residues 263–286; that stretch reads TFPGPSHVFSGSKASSDLNGGDES.

This sequence belongs to the PanB family. As to quaternary structure, homodecamer; pentamer of dimers. Mg(2+) is required as a cofactor.

Its subcellular location is the cytoplasm. It carries out the reaction 3-methyl-2-oxobutanoate + (6R)-5,10-methylene-5,6,7,8-tetrahydrofolate + H2O = 2-dehydropantoate + (6S)-5,6,7,8-tetrahydrofolate. It functions in the pathway cofactor biosynthesis; (R)-pantothenate biosynthesis; (R)-pantoate from 3-methyl-2-oxobutanoate: step 1/2. Its function is as follows. Catalyzes the reversible reaction in which hydroxymethyl group from 5,10-methylenetetrahydrofolate is transferred onto alpha-ketoisovalerate to form ketopantoate. The sequence is that of 3-methyl-2-oxobutanoate hydroxymethyltransferase from Mesorhizobium japonicum (strain LMG 29417 / CECT 9101 / MAFF 303099) (Mesorhizobium loti (strain MAFF 303099)).